We begin with the raw amino-acid sequence, 415 residues long: Adenylosuccinate synthetase (415 aa).

Residues 12–18 and 40–42 each bind GTP; these read GDEGKGK and GHT. Catalysis depends on Asp-13, which acts as the Proton acceptor. Positions 13 and 40 each coordinate Mg(2+). IMP contacts are provided by residues 13–16, 38–41, Thr-125, Arg-139, Gln-219, Thr-234, and Arg-298; these read DEGK and NAGH. His-41 functions as the Proton donor in the catalytic mechanism. Substrate is bound at residue 294–300; the sequence is TTTGRPR. GTP-binding positions include Arg-300, 326–328, and 404–406; these read KLD and STG.

Belongs to the adenylosuccinate synthetase family. In terms of assembly, homodimer. Mg(2+) serves as cofactor.

The protein localises to the cytoplasm. The enzyme catalyses IMP + L-aspartate + GTP = N(6)-(1,2-dicarboxyethyl)-AMP + GDP + phosphate + 2 H(+). It functions in the pathway purine metabolism; AMP biosynthesis via de novo pathway; AMP from IMP: step 1/2. Its function is as follows. Plays an important role in the de novo pathway of purine nucleotide biosynthesis. Catalyzes the first committed step in the biosynthesis of AMP from IMP. In Wolinella succinogenes (strain ATCC 29543 / DSM 1740 / CCUG 13145 / JCM 31913 / LMG 7466 / NCTC 11488 / FDC 602W) (Vibrio succinogenes), this protein is Adenylosuccinate synthetase.